A 442-amino-acid polypeptide reads, in one-letter code: 3-isopropylmalate dehydratase large subunit (442 aa).

Residues C347, C407, and C410 each contribute to the [4Fe-4S] cluster site.

Belongs to the aconitase/IPM isomerase family. LeuC type 1 subfamily. In terms of assembly, heterodimer of LeuC and LeuD. The cofactor is [4Fe-4S] cluster.

It catalyses the reaction (2R,3S)-3-isopropylmalate = (2S)-2-isopropylmalate. It participates in amino-acid biosynthesis; L-leucine biosynthesis; L-leucine from 3-methyl-2-oxobutanoate: step 2/4. Catalyzes the isomerization between 2-isopropylmalate and 3-isopropylmalate, via the formation of 2-isopropylmaleate. This is 3-isopropylmalate dehydratase large subunit from Buchnera aphidicola subsp. Uroleucon helianthicola.